Here is a 470-residue protein sequence, read N- to C-terminus: UDP-N-acetylmuramoylalanine--D-glutamate ligase (470 aa).

121-127 (GTNGKST) is an ATP binding site.

The protein belongs to the MurCDEF family.

The protein resides in the cytoplasm. The enzyme catalyses UDP-N-acetyl-alpha-D-muramoyl-L-alanine + D-glutamate + ATP = UDP-N-acetyl-alpha-D-muramoyl-L-alanyl-D-glutamate + ADP + phosphate + H(+). It functions in the pathway cell wall biogenesis; peptidoglycan biosynthesis. Cell wall formation. Catalyzes the addition of glutamate to the nucleotide precursor UDP-N-acetylmuramoyl-L-alanine (UMA). The chain is UDP-N-acetylmuramoylalanine--D-glutamate ligase from Rhizobium johnstonii (strain DSM 114642 / LMG 32736 / 3841) (Rhizobium leguminosarum bv. viciae).